We begin with the raw amino-acid sequence, 188 residues long: Peptidyl-tRNA hydrolase (188 aa).

Tyr-14 contacts tRNA. Residue His-19 is the Proton acceptor of the active site. Positions 64, 66, and 112 each coordinate tRNA.

Belongs to the PTH family. As to quaternary structure, monomer.

It is found in the cytoplasm. The catalysed reaction is an N-acyl-L-alpha-aminoacyl-tRNA + H2O = an N-acyl-L-amino acid + a tRNA + H(+). Its function is as follows. Hydrolyzes ribosome-free peptidyl-tRNAs (with 1 or more amino acids incorporated), which drop off the ribosome during protein synthesis, or as a result of ribosome stalling. Functionally, catalyzes the release of premature peptidyl moieties from peptidyl-tRNA molecules trapped in stalled 50S ribosomal subunits, and thus maintains levels of free tRNAs and 50S ribosomes. This chain is Peptidyl-tRNA hydrolase, found in Bacillus pumilus (strain SAFR-032).